The primary structure comprises 293 residues: 4-hydroxy-tetrahydrodipicolinate synthase (293 aa).

Thr47 contacts pyruvate. Catalysis depends on Tyr135, which acts as the Proton donor/acceptor. Lys163 (schiff-base intermediate with substrate) is an active-site residue. Pyruvate is bound at residue Val205.

Belongs to the DapA family. Homotetramer; dimer of dimers.

It is found in the cytoplasm. It catalyses the reaction L-aspartate 4-semialdehyde + pyruvate = (2S,4S)-4-hydroxy-2,3,4,5-tetrahydrodipicolinate + H2O + H(+). It participates in amino-acid biosynthesis; L-lysine biosynthesis via DAP pathway; (S)-tetrahydrodipicolinate from L-aspartate: step 3/4. Catalyzes the condensation of (S)-aspartate-beta-semialdehyde [(S)-ASA] and pyruvate to 4-hydroxy-tetrahydrodipicolinate (HTPA). The protein is 4-hydroxy-tetrahydrodipicolinate synthase of Leptothrix cholodnii (strain ATCC 51168 / LMG 8142 / SP-6) (Leptothrix discophora (strain SP-6)).